The following is a 408-amino-acid chain: Imidazolonepropionase (408 aa).

The Fe(3+) site is built by H73 and H75. H73 and H75 together coordinate Zn(2+). Residues R82, Y145, and H178 each coordinate 4-imidazolone-5-propanoate. Y145 contacts N-formimidoyl-L-glutamate. H243 contributes to the Fe(3+) binding site. H243 contributes to the Zn(2+) binding site. Q246 contacts 4-imidazolone-5-propanoate. D318 lines the Fe(3+) pocket. D318 lines the Zn(2+) pocket. N-formimidoyl-L-glutamate contacts are provided by N320 and G322. S323 lines the 4-imidazolone-5-propanoate pocket.

The protein belongs to the metallo-dependent hydrolases superfamily. HutI family. Zn(2+) is required as a cofactor. Fe(3+) serves as cofactor.

The protein localises to the cytoplasm. It catalyses the reaction 4-imidazolone-5-propanoate + H2O = N-formimidoyl-L-glutamate. Its pathway is amino-acid degradation; L-histidine degradation into L-glutamate; N-formimidoyl-L-glutamate from L-histidine: step 3/3. Catalyzes the hydrolytic cleavage of the carbon-nitrogen bond in imidazolone-5-propanoate to yield N-formimidoyl-L-glutamate. It is the third step in the universal histidine degradation pathway. The chain is Imidazolonepropionase from Shewanella piezotolerans (strain WP3 / JCM 13877).